We begin with the raw amino-acid sequence, 934 residues long: Bifunctional uridylyltransferase/uridylyl-removing enzyme (934 aa).

The segment at 1–379 (MSAHDLKLEE…TFSRRKRKLS (379 aa)) is uridylyltransferase. The interval 380 to 736 (ADGDFVSENH…AKPHTFEAVT (357 aa)) is uridylyl-removing. Residues 496-613 (VDEHLLRCIA…IDFADTVQTM (118 aa)) enclose the HD domain. ACT domains are found at residues 737–819 (EITV…VLAK) and 848–931 (VIEV…RSSQ).

Belongs to the GlnD family. Mg(2+) is required as a cofactor.

The enzyme catalyses [protein-PII]-L-tyrosine + UTP = [protein-PII]-uridylyl-L-tyrosine + diphosphate. The catalysed reaction is [protein-PII]-uridylyl-L-tyrosine + H2O = [protein-PII]-L-tyrosine + UMP + H(+). Its activity is regulated as follows. Uridylyltransferase (UTase) activity is inhibited by glutamine, while glutamine activates uridylyl-removing (UR) activity. Functionally, modifies, by uridylylation and deuridylylation, the PII regulatory proteins (GlnB and homologs), in response to the nitrogen status of the cell that GlnD senses through the glutamine level. Under low glutamine levels, catalyzes the conversion of the PII proteins and UTP to PII-UMP and PPi, while under higher glutamine levels, GlnD hydrolyzes PII-UMP to PII and UMP (deuridylylation). Thus, controls uridylylation state and activity of the PII proteins, and plays an important role in the regulation of nitrogen assimilation and metabolism. This chain is Bifunctional uridylyltransferase/uridylyl-removing enzyme, found in Brucella anthropi (strain ATCC 49188 / DSM 6882 / CCUG 24695 / JCM 21032 / LMG 3331 / NBRC 15819 / NCTC 12168 / Alc 37) (Ochrobactrum anthropi).